The following is a 293-amino-acid chain: 33 kDa chaperonin (293 aa).

Cystine bridges form between C238/C240 and C271/C274.

The protein belongs to the HSP33 family. In terms of processing, under oxidizing conditions two disulfide bonds are formed involving the reactive cysteines. Under reducing conditions zinc is bound to the reactive cysteines and the protein is inactive.

Its subcellular location is the cytoplasm. In terms of biological role, redox regulated molecular chaperone. Protects both thermally unfolding and oxidatively damaged proteins from irreversible aggregation. Plays an important role in the bacterial defense system toward oxidative stress. This chain is 33 kDa chaperonin, found in Staphylococcus epidermidis (strain ATCC 35984 / DSM 28319 / BCRC 17069 / CCUG 31568 / BM 3577 / RP62A).